The following is a 130-amino-acid chain: MSVAQNYGTGRRKSSTARVFIKPGSGNISINGRTIEDFFGRETLRMIVRQPLVVAESEDRFDIAITVKGGGISGQAGAIRHGLTRALMDYDETLRPALRKAGYVTRDARKVERKKVGLRKARKRPQYSKR.

It belongs to the universal ribosomal protein uS9 family.

The chain is Small ribosomal subunit protein uS9 from Marinobacter nauticus (strain ATCC 700491 / DSM 11845 / VT8) (Marinobacter aquaeolei).